The chain runs to 228 residues: Expansin-B13 (228 aa).

An N-terminal signal peptide occupies residues 1 to 22; that stretch reads MASSSLLLASVVVAAMVSAVSC. N-linked (GlcNAc...) asparagine glycosylation is present at asparagine 32. The 112-residue stretch at 61-172 folds into the Expansin-like EG45 domain; the sequence is SGACGYKDVD…KEKGSEEWKA (112 aa). Cystine bridges form between cysteine 64–cysteine 92 and cysteine 100–cysteine 106. Residues 142 to 223 enclose the Expansin-like CBD domain; sequence GKDEELLKYV…GWKADSVYKS (82 aa).

It belongs to the expansin family. Expansin B subfamily.

The protein localises to the secreted. Its subcellular location is the cell wall. It localises to the membrane. May cause loosening and extension of plant cell walls by disrupting non-covalent bonding between cellulose microfibrils and matrix glucans. No enzymatic activity has been found. May be required for rapid internodal elongation in deepwater rice during submergence. In Oryza sativa subsp. japonica (Rice), this protein is Expansin-B13 (EXPB13).